The chain runs to 514 residues: Ras-GEF domain-containing family member 1B-A (514 aa).

The N-terminal Ras-GEF domain maps to 76–206 (HDNNLISGSL…MTQTLIRKLT (131 aa)). Residues 246-494 (DPFTLAQQLT…YLASYESEGP (249 aa)) enclose the Ras-GEF domain.

As to expression, detected in oocytes, and in embryos at 4 to 120 hours post-fertilization (hpf). Detected along marginal blastomeres at early epiboly stage and throughout the margin at the onset of gastrulation. At 60% epiboly, strongest expression is found in the dorsal shield region and is restricted to the epiblast. Detected in the anterior border of the presomitic mesoderm at the end of epiboly. Detected in adaxial cells, in the somites and in the nervous system during somitogenesis. Detected in diencephalon and hindbrain and in cells surrounding the notochord, including adaxial cells and ventral mesendoderm, in 15-somite stage embryos. At 48 hpf, detected mainly in the brain.

Guanine nucleotide exchange factor (GEF) for Ras family proteins (in vitro). The polypeptide is Ras-GEF domain-containing family member 1B-A (rasgef1ba) (Danio rerio (Zebrafish)).